The sequence spans 283 residues: Large ribosomal subunit protein uL2 (283 aa).

Disordered regions lie at residues 34–53 and 224–283; these read TEPY…TARH and AMNP…KKKK. A compositionally biased stretch (gly residues) spans 232–245; the sequence is NGGGQGKSKGGGGW. The segment covering 256-268 has biased composition (basic residues); that stretch reads AKGKKTRHKRKNS.

This sequence belongs to the universal ribosomal protein uL2 family. Part of the 50S ribosomal subunit. Forms a bridge to the 30S subunit in the 70S ribosome.

Its function is as follows. One of the primary rRNA binding proteins. Required for association of the 30S and 50S subunits to form the 70S ribosome, for tRNA binding and peptide bond formation. It has been suggested to have peptidyltransferase activity; this is somewhat controversial. Makes several contacts with the 16S rRNA in the 70S ribosome. The polypeptide is Large ribosomal subunit protein uL2 (Methylacidiphilum infernorum (isolate V4) (Methylokorus infernorum (strain V4))).